The chain runs to 99 residues: UPF0235 protein Avin_03050 (99 aa).

A disordered region spans residues 66–99 (VSLESGESNRQKRVRIRRPRQLPALPGLAPRPDA). Over residues 76–85 (QKRVRIRRPR) the composition is skewed to basic residues.

This sequence belongs to the UPF0235 family.

The polypeptide is UPF0235 protein Avin_03050 (Azotobacter vinelandii (strain DJ / ATCC BAA-1303)).